A 35-amino-acid chain; its full sequence is Photosystem II reaction center protein M (35 aa).

Residues 7–27 (GFIASILFVLVPTVFLLILFI) form a helical membrane-spanning segment.

The protein belongs to the PsbM family. In terms of assembly, PSII is composed of 1 copy each of membrane proteins PsbA, PsbB, PsbC, PsbD, PsbE, PsbF, PsbH, PsbI, PsbJ, PsbK, PsbL, PsbM, PsbT, PsbX, PsbY, PsbZ, Psb30/Ycf12, peripheral proteins PsbO, CyanoQ (PsbQ), PsbU, PsbV and a large number of cofactors. It forms dimeric complexes.

The protein localises to the cellular thylakoid membrane. In terms of biological role, one of the components of the core complex of photosystem II (PSII). PSII is a light-driven water:plastoquinone oxidoreductase that uses light energy to abstract electrons from H(2)O, generating O(2) and a proton gradient subsequently used for ATP formation. It consists of a core antenna complex that captures photons, and an electron transfer chain that converts photonic excitation into a charge separation. This subunit is found at the monomer-monomer interface. The chain is Photosystem II reaction center protein M from Microcystis aeruginosa (strain NIES-843 / IAM M-2473).